A 770-amino-acid chain; its full sequence is Protein PAT1 homolog 1 (770 aa).

The interval 1-26 (MFRYESLEDCPLDEDEDAFQGLGEED) is disordered. A region A; interaction with DDX6/RCK region spans residues 1–84 (MFRYESLEDC…EMDLLGDHEE (84 aa)). An involved in nuclear foci localization region spans residues 1–397 (MFRYESLEDC…HRSSHQDHLR (397 aa)). The segment covering 7–26 (LEDCPLDEDEDAFQGLGEED) has biased composition (acidic residues). The interval 85–388 (NLAERLSKMV…LNGAGDRGSH (304 aa)) is region N; interaction with decapping machinery. The Nuclear export signal motif lies at 86 to 95 (LAERLSKMVI). Phosphoserine is present on S177. At T178 the chain carries Phosphothreonine. A phosphoserine mark is found at S179 and S184. Phosphothreonine is present on T194. Residues R217, R223, and R263 each carry the asymmetric dimethylarginine modification. The interval 223–397 (RYPAPYGERM…HRSSHQDHLR (175 aa)) is involved in RNA-binding. S278 carries the post-translational modification Phosphoserine. R284 carries the post-translational modification Asymmetric dimethylarginine. The segment covering 314–323 (GFRAFFSAPP) has biased composition (low complexity). Disordered stretches follow at residues 314 to 344 (GFRAFFSAPPSATPPPQQHPPGPGPHLQNLR) and 360 to 399 (QHRRLLHQRQQQNRSQHRNLNGAGDRGSHRSSHQDHLRKD). The span at 324–337 (SATPPPQQHPPGPG) shows a compositional bias: pro residues. Residues 367-380 (QRQQQNRSQHRNLN) are compositionally biased toward low complexity. Omega-N-methylarginine is present on R385. Residues 385–399 (RGSHRSSHQDHLRKD) are compositionally biased toward basic and acidic residues. The tract at residues 389–448 (RSSHQDHLRKDPYANLMLQREKDWVSKIQMMQLQSTDPYLDDFYYQNYFEKLEKLSAAEE) is region H. The segment at 398–770 (KDPYANLMLQ…TKLQLVQGIR (373 aa)) is involved in nuclear speckle localization. Residues 449–770 (IQGDGPKKER…TKLQLVQGIR (322 aa)) form a region C region.

It belongs to the PAT1 family. In terms of assembly, interacts (via region A) with DDX6/RCK. Interacts (via region H and region C) with LSM1 and LSM4. Interacts (via region N) with DCP1A, DCP2, EDC3, EDC4 and XRN1. Interacts with the CCR4-NOT complex. Interacts with the Lsm-containing SMN-Sm protein complex. Interacts with EIF4ENIF1/4E-T. Ubiquitous.

The protein resides in the cytoplasm. It localises to the P-body. It is found in the nucleus. Its subcellular location is the PML body. The protein localises to the nucleus speckle. Functionally, RNA-binding protein involved in deadenylation-dependent decapping of mRNAs, leading to the degradation of mRNAs. Acts as a scaffold protein that connects deadenylation and decapping machinery. Required for cytoplasmic mRNA processing body (P-body) assembly. Its function is as follows. (Microbial infection) In case of infection, required for translation and replication of hepatitis C virus (HCV). This is Protein PAT1 homolog 1 (PATL1) from Homo sapiens (Human).